A 276-amino-acid polypeptide reads, in one-letter code: Shikimate dehydrogenase (NADP(+)) (276 aa).

Residues 18–20 (SKS) and threonine 65 contribute to the shikimate site. The active-site Proton acceptor is lysine 69. Glutamate 81 provides a ligand contact to NADP(+). Asparagine 90 and aspartate 106 together coordinate shikimate. Residues 130 to 134 (GAGGA), 154 to 159 (NRTSSK), and methionine 217 each bind NADP(+). Tyrosine 219 serves as a coordination point for shikimate. Residue glycine 241 participates in NADP(+) binding.

This sequence belongs to the shikimate dehydrogenase family. In terms of assembly, homodimer.

It catalyses the reaction shikimate + NADP(+) = 3-dehydroshikimate + NADPH + H(+). Its pathway is metabolic intermediate biosynthesis; chorismate biosynthesis; chorismate from D-erythrose 4-phosphate and phosphoenolpyruvate: step 4/7. Involved in the biosynthesis of the chorismate, which leads to the biosynthesis of aromatic amino acids. Catalyzes the reversible NADPH linked reduction of 3-dehydroshikimate (DHSA) to yield shikimate (SA). The protein is Shikimate dehydrogenase (NADP(+)) of Vibrio atlanticus (strain LGP32) (Vibrio splendidus (strain Mel32)).